Here is a 306-residue protein sequence, read N- to C-terminus: GTP-binding protein RAD (306 aa).

Positions 1-13 (MTLNGGSGAGGSR) are enriched in gly residues. Residues 1 to 91 (MTLNGGSGAG…GDSGSEDGVY (91 aa)) are disordered. Arg23 carries the post-translational modification Omega-N-methylarginine. Ser25 is subject to Phosphoserine. Over residues 56–88 (AATAAGTRTQGQRLDWPEGSSDSLSSGDSGSED) the composition is skewed to low complexity. GTP is bound by residues 97–104 (GAPGVGKS) and 201–204 (NKSD). The segment at 276–295 (AKLFLGRIVARNSRKMAFLA) is calmodulin-binding.

The protein belongs to the small GTPase superfamily. RGK family. Interacts with Calmodulin preferentially in the inactive, GDP-bound form. Interacts with CAMK2D. Interacts with CACNB2; interaction may be involved in beta-adrenergic regulation of heart rate and contractile force. Interaction with CACNB2 regulates the trafficking of CACNA1C to the cell membrane.

The protein localises to the cell membrane. May regulate basal voltage-dependent L-type Ca(2+) currents and be required for beta-adrenergic augmentation of Ca(2+) influx in cardiomyocytes, thereby regulating increases in heart rate and contractile force. May play an important role in cardiac antiarrhythmia via the strong suppression of voltage-dependent L-type Ca(2+) currents. Regulates voltage-gated L-type calcium channel subunit alpha-1C trafficking to the cell membrane. Inhibits cardiac hypertrophy through the calmodulin-dependent kinase II (CaMKII) pathway. Inhibits phosphorylation and activation of CAMK2D. The protein is GTP-binding protein RAD (Rrad) of Rattus norvegicus (Rat).